Reading from the N-terminus, the 986-residue chain is Vacuolar membrane protease (986 aa).

At 1–16 (MAPLRLSRANPLAFAR) the chain is on the cytoplasmic side. Residues 17-37 (WPVTLITAVVYLAFLIPLLIV) traverse the membrane as a helical segment. The Vacuolar segment spans residues 38–392 (HHVVPSPPTA…TTFVLFELHT (355 aa)). The N-linked (GlcNAc...) asparagine glycan is linked to N121. Zn(2+) contacts are provided by H176 and D188. E222 acts as the Proton acceptor in catalysis. E223, E248, and H321 together coordinate Zn(2+). The helical transmembrane segment at 393-413 (LFALSVTLLVVAPLALLVTGI) threads the bilayer. Residues 414-444 (ALTRADKMYLFRTSAKADESLDSVPLQGLRG) are Cytoplasmic-facing. The chain crosses the membrane as a helical span at residues 445 to 465 (FFRFPFLFAIPTAVTVGLAYL). At 466 to 475 (VTKVNPLIIH) the chain is on the vacuolar side. The chain crosses the membrane as a helical span at residues 476-496 (SSEYAVWSMMLSAWTFLAWFV). Residues 497-510 (SRMADFARPTALHR) lie on the Cytoplasmic side of the membrane. The helical transmembrane segment at 511-531 (IYTLTWMFVLAWVLLVISTVY) threads the bilayer. Topologically, residues 532–535 (QNQR) are vacuolar. Residues 536 to 556 (GLAGSYSVFFFFSGTFLATWI) traverse the membrane as a helical segment. Residues 557–668 (SYLELFSLPR…SASLPTWTWT (112 aa)) lie on the Cytoplasmic side of the membrane. A compositionally biased stretch (polar residues) spans 573-585 (QNRPTSRRASSYG). The interval 573-622 (QNRPTSRRASSYGGSRLGTASGEDHEEDDHDAEEEEEEQEPTESTSLLGG) is disordered. Residues 596–613 (DHEEDDHDAEEEEEEQEP) are compositionally biased toward acidic residues. The helical transmembrane segment at 669–689 (LQFLLMAPLVLIMVGPLALLL) threads the bilayer. At 690-704 (TSALHQTGQDGSSSL) the chain is on the vacuolar side. A helical transmembrane segment spans residues 705 to 725 (FIYVAIAALTTFLLTPLLPFI). Residues 726-732 (HRHTYHL) are Cytoplasmic-facing. The helical transmembrane segment at 733–753 (PVFLLLVFLGTLIYNLVAFPF) threads the bilayer. At 754–986 (SPTNRLKLFF…LVEGWKGFSI (233 aa)) the chain is on the vacuolar side. Residues N799, N840, and N948 are each glycosylated (N-linked (GlcNAc...) asparagine). A disordered region spans residues 840–859 (NTTDDKEGDEDTHHPRKARI).

The protein belongs to the peptidase M28 family. The cofactor is Zn(2+).

The protein resides in the vacuole membrane. Functionally, may be involved in vacuolar sorting and osmoregulation. This chain is Vacuolar membrane protease, found in Aspergillus niger (strain ATCC MYA-4892 / CBS 513.88 / FGSC A1513).